A 235-amino-acid polypeptide reads, in one-letter code: Small ribosomal subunit protein uS2 (235 aa).

Belongs to the universal ribosomal protein uS2 family.

This chain is Small ribosomal subunit protein uS2 (rpsB), found in Geobacillus stearothermophilus (Bacillus stearothermophilus).